A 1449-amino-acid polypeptide reads, in one-letter code: Gag-Pol polyprotein (1449 aa).

Glycine 2 carries N-myristoyl glycine; by host lipidation. Positions 16–22 match the Nuclear export signal motif; sequence LEKVRLR. The Nuclear localization signal signature appears at 26 to 32; it reads KKKYMLK. The disordered stretch occupies residues 215 to 237; it reads DLQHPQPGPLPAGQLREPRGSDI. CCHC-type zinc fingers lie at residues 392–409 and 413–430; these read IKCW…QCRA and QGCW…KCPE. The disordered stretch occupies residues 442-494; the sequence is GKEAPQFPHGPDASGADTNCSPRGSSCGSTEELHEDGQKAEGEQRETLQGGDR. Polar residues predominate over residues 457–470; that stretch reads ADTNCSPRGSSCGS. Over residues 472-487 the composition is skewed to basic and acidic residues; sequence EELHEDGQKAEGEQRE. The region spanning 518 to 587 is the Peptidase A2 domain; the sequence is VEVLLDTGAD…TPINIFGRNL (70 aa). The active-site For protease activity; shared with dimeric partner is the aspartate 523. The Reverse transcriptase domain occupies 641-831; sequence DGQLEEAPPT…PPFQWMGYEL (191 aa). 3 residues coordinate Mg(2+): aspartate 707, aspartate 782, and aspartate 783. Positions 824–832 are RT 'primer grip'; the sequence is FQWMGYELW. Positions 994–1010 match the Tryptophan repeat motif motif; sequence WEQWWTDYWQVTWIPDW. Residues 1030 to 1153 form the RNase H type-1 domain; it reads IQGAETFYVD…VDHLVSQGIR (124 aa). Mg(2+) is bound by residues aspartate 1039, glutamate 1074, aspartate 1094, and aspartate 1145. The segment at 1159–1200 adopts an Integrase-type zinc-finger fold; it reads KKIEPAQEEHEKYHSNVKELVFKFGLPRLVAKQIVDTCDKCH. Histidine 1168, histidine 1172, cysteine 1196, and cysteine 1199 together coordinate Zn(2+). Residues 1210-1360 form the Integrase catalytic domain; sequence VNAELGTWQM…TPAERLVNMI (151 aa). 2 residues coordinate Mg(2+): aspartate 1220 and aspartate 1272. The segment at residues 1379-1426 is a DNA-binding region (integrase-type); that stretch reads FRVYYREGRDQLWKGPGELLWKGEGAVILKVGTEIKVVPRRKAKIIKD.

In terms of assembly, homotrimer. Interacts with gp41 (via C-terminus). Homodimer. The active site consists of two apposed aspartic acid residues. As to quaternary structure, heterodimer of p66 RT and p51 RT (RT p66/p51). Heterodimerization of RT is essential for DNA polymerase activity. Despite the sequence identities, p66 RT and p51 RT have distinct folding. In terms of assembly, homotetramer; may further associate as a homohexadecamer. Requires Mg(2+) as cofactor. Specific enzymatic cleavages by the viral protease yield mature proteins. The protease is released by autocatalytic cleavage. The polyprotein is cleaved during and after budding, this process is termed maturation. Proteolytic cleavage of p66 RT removes the RNase H domain to yield the p51 RT subunit. In terms of processing, capsid protein p24 is phosphorylated.

The protein localises to the virion. Its subcellular location is the host nucleus. It localises to the host cytoplasm. The protein resides in the host cell membrane. The enzyme catalyses Specific for a P1 residue that is hydrophobic, and P1' variable, but often Pro.. It carries out the reaction Endohydrolysis of RNA in RNA/DNA hybrids. Three different cleavage modes: 1. sequence-specific internal cleavage of RNA. Human immunodeficiency virus type 1 and Moloney murine leukemia virus enzymes prefer to cleave the RNA strand one nucleotide away from the RNA-DNA junction. 2. RNA 5'-end directed cleavage 13-19 nucleotides from the RNA end. 3. DNA 3'-end directed cleavage 15-20 nucleotides away from the primer terminus.. The catalysed reaction is 3'-end directed exonucleolytic cleavage of viral RNA-DNA hybrid.. It catalyses the reaction DNA(n) + a 2'-deoxyribonucleoside 5'-triphosphate = DNA(n+1) + diphosphate. Its activity is regulated as follows. The viral protease is inhibited by many synthetic protease inhibitors (PIs), such as amprenavir, atazanavir, indinavir, loprinavir, nelfinavir, ritonavir and saquinavir. RT can be inhibited either by nucleoside RT inhibitors (NRTIs) or by non nucleoside RT inhibitors (NNRTIs). NRTIs act as chain terminators, whereas NNRTIs inhibit DNA polymerization by binding a small hydrophobic pocket near the RT active site and inducing an allosteric change in this region. Classical NRTIs are abacavir, adefovir (PMEA), didanosine (ddI), lamivudine (3TC), stavudine (d4T), tenofovir (PMPA), zalcitabine (ddC), and zidovudine (AZT). Classical NNRTIs are atevirdine (BHAP U-87201E), delavirdine, efavirenz (DMP-266), emivirine (I-EBU), and nevirapine (BI-RG-587). The tritherapies used as a basic effective treatment of AIDS associate two NRTIs and one NNRTI. Use of protease inhibitors in tritherapy regimens permit more ambitious therapeutic strategies. Gag-Pol polyprotein and Gag polyprotein may regulate their own translation, by the binding genomic RNA in the 5'-UTR. At low concentration, Gag-Pol and Gag would promote translation, whereas at high concentration, the polyproteins encapsidate genomic RNA and then shut off translation. Its function is as follows. Matrix protein p17 has two main functions: in infected cell, it targets Gag and Gag-pol polyproteins to the plasma membrane via a multipartite membrane-binding signal, that includes its myristointegration complex. The myristoylation signal and the NLS exert conflicting influences its subcellular localization. The key regulation of these motifs might be phosphorylation of a portion of MA molecules on the C-terminal tyrosine at the time of virus maturation, by virion-associated cellular tyrosine kinase. Implicated in the release from host cell mediated by Vpu. Functionally, capsid protein p24 forms the conical core that encapsulates the genomic RNA-nucleocapsid complex in the virion. The core is constituted by capsid protein hexamer subunits. The core is disassembled soon after virion entry. Interaction with host PPIA/CYPA protects the virus from restriction by host TRIM5-alpha and from an unknown antiviral activity in host cells. This capsid restriction by TRIM5 is one of the factors which restricts SIV to the simian species. In terms of biological role, nucleocapsid protein p7 encapsulates and protects viral dimeric unspliced (genomic) RNA. Binds these RNAs through its zinc fingers. Facilitates rearangement of nucleic acid secondary structure during retrotranscription of genomic RNA. This capability is referred to as nucleic acid chaperone activity. The aspartyl protease mediates proteolytic cleavages of Gag and Gag-Pol polyproteins during or shortly after the release of the virion from the plasma membrane. Cleavages take place as an ordered, step-wise cascade to yield mature proteins. This process is called maturation. Displays maximal activity during the budding process just prior to particle release from the cell. Also cleaves Nef and Vif, probably concomitantly with viral structural proteins on maturation of virus particles. Hydrolyzes host EIF4GI and PABP1 in order to shut off the capped cellular mRNA translation. The resulting inhibition of cellular protein synthesis serves to ensure maximal viral gene expression and to evade host immune response. Its function is as follows. Reverse transcriptase/ribonuclease H (RT) is a multifunctional enzyme that converts the viral dimeric RNA genome into dsDNA in the cytoplasm, shortly after virus entry into the cell. This enzyme displays a DNA polymerase activity that can copy either DNA or RNA templates, and a ribonuclease H (RNase H) activity that cleaves the RNA strand of RNA-DNA heteroduplexes in a partially processive 3' to 5' endonucleasic mode. Conversion of viral genomic RNA into dsDNA requires many steps. A tRNA binds to the primer-binding site (PBS) situated at the 5'-end of the viral RNA. RT uses the 3' end of the tRNA primer to perform a short round of RNA-dependent minus-strand DNA synthesis. The reading proceeds through the U5 region and ends after the repeated (R) region which is present at both ends of viral RNA. The portion of the RNA-DNA heteroduplex is digested by the RNase H, resulting in a ssDNA product attached to the tRNA primer. This ssDNA/tRNA hybridizes with the identical R region situated at the 3' end of viral RNA. This template exchange, known as minus-strand DNA strong stop transfer, can be either intra- or intermolecular. RT uses the 3' end of this newly synthesized short ssDNA to perform the RNA-dependent minus-strand DNA synthesis of the whole template. RNase H digests the RNA template except for two polypurine tracts (PPTs) situated at the 5'-end and near the center of the genome. It is not clear if both polymerase and RNase H activities are simultaneous. RNase H can probably proceed both in a polymerase-dependent (RNA cut into small fragments by the same RT performing DNA synthesis) and a polymerase-independent mode (cleavage of remaining RNA fragments by free RTs). Secondly, RT performs DNA-directed plus-strand DNA synthesis using the PPTs that have not been removed by RNase H as primers. PPTs and tRNA primers are then removed by RNase H. The 3' and 5' ssDNA PBS regions hybridize to form a circular dsDNA intermediate. Strand displacement synthesis by RT to the PBS and PPT ends produces a blunt ended, linear dsDNA copy of the viral genome that includes long terminal repeats (LTRs) at both ends. Functionally, integrase catalyzes viral DNA integration into the host chromosome, by performing a series of DNA cutting and joining reactions. This enzyme activity takes place after virion entry into a cell and reverse transcription of the RNA genome in dsDNA. The first step in the integration process is 3' processing. This step requires a complex comprising the viral genome, matrix protein, Vpr and integrase. This complex is called the pre-integration complex (PIC). The integrase protein removes 2 nucleotides from each 3' end of the viral DNA, leaving recessed CA OH's at the 3' ends. In the second step, the PIC enters cell nucleus. This process is mediated through integrase and Vpr proteins, and allows the virus to infect a non dividing cell. This ability to enter the nucleus is specific of lentiviruses, other retroviruses cannot and rely on cell division to access cell chromosomes. In the third step, termed strand transfer, the integrase protein joins the previously processed 3' ends to the 5' ends of strands of target cellular DNA at the site of integration. The 5'-ends are produced by integrase-catalyzed staggered cuts, 5 bp apart. A Y-shaped, gapped, recombination intermediate results, with the 5'-ends of the viral DNA strands and the 3' ends of target DNA strands remaining unjoined, flanking a gap of 5 bp. The last step is viral DNA integration into host chromosome. This involves host DNA repair synthesis in which the 5 bp gaps between the unjoined strands are filled in and then ligated. Since this process occurs at both cuts flanking the SIV genome, a 5 bp duplication of host DNA is produced at the ends of SIV integration. Alternatively, Integrase may catalyze the excision of viral DNA just after strand transfer, this is termed disintegration. The polypeptide is Gag-Pol polyprotein (gag-pol) (Cercopithecidae (Old World monkeys)).